The primary structure comprises 807 residues: Glycerol-3-phosphate acyltransferase (807 aa).

The HXXXXD motif signature appears at 308-313 (CHRSHM).

Belongs to the GPAT/DAPAT family.

It localises to the cell inner membrane. The enzyme catalyses sn-glycerol 3-phosphate + an acyl-CoA = a 1-acyl-sn-glycero-3-phosphate + CoA. The protein operates within phospholipid metabolism; CDP-diacylglycerol biosynthesis; CDP-diacylglycerol from sn-glycerol 3-phosphate: step 1/3. This Shewanella sp. (strain W3-18-1) protein is Glycerol-3-phosphate acyltransferase.